We begin with the raw amino-acid sequence, 329 residues long: Serpentine receptor class alpha-7 (329 aa).

The next 7 membrane-spanning stretches (helical) occupy residues 25–45, 57–77, 104–124, 143–163, 187–207, 237–257, and 273–293; these read YVYL…VKIV, ILLF…LFSA, YLKV…GLLL, VGIA…KIII, RLFA…SVLL, TICF…FGIF, and FIVV…ILLV.

It belongs to the nematode receptor-like protein sra family.

The protein localises to the membrane. The sequence is that of Serpentine receptor class alpha-7 (sra-7) from Caenorhabditis elegans.